A 123-amino-acid polypeptide reads, in one-letter code: MTTITPESLPRHELLGLHARVAADTDQSRVGIAGRVVDETMQTVVLRTASGVAQVPKKGATFEFRLTDEAAAPDNGVGTAFKPAGGETRQTTGESVAYVTVDGGRLLSRPERRSENGVDSKWR.

The interval 73–93 (PDNGVGTAFKPAGGETRQTTG) is disordered.

Belongs to the eukaryotic/archaeal RNase P protein component 1 family. In terms of assembly, consists of a catalytic RNA component and at least 4-5 protein subunits.

Its subcellular location is the cytoplasm. It catalyses the reaction Endonucleolytic cleavage of RNA, removing 5'-extranucleotides from tRNA precursor.. Functionally, part of ribonuclease P, a protein complex that generates mature tRNA molecules by cleaving their 5'-ends. The chain is Ribonuclease P protein component 1 from Halobacterium salinarum (strain ATCC 29341 / DSM 671 / R1).